We begin with the raw amino-acid sequence, 229 residues long: Type-5 uracil-DNA glycosylase (229 aa).

4 residues coordinate [4Fe-4S] cluster: Cys-19, Cys-22, Cys-123, and Cys-138.

This sequence belongs to the uracil-DNA glycosylase (UDG) superfamily. Type 5 (UDGb) family.

DNA glycosylase with broad substrate specificity. The polypeptide is Type-5 uracil-DNA glycosylase (Mycobacterium leprae (strain TN)).